Consider the following 452-residue polypeptide: tRNA-2-methylthio-N(6)-dimethylallyladenosine synthase (452 aa).

The MTTase N-terminal domain occupies 3–118 (KKVFIKTYGC…LPQLLAERER (116 aa)). Positions 12, 49, 81, 155, 159, and 162 each coordinate [4Fe-4S] cluster. The Radical SAM core domain occupies 141–379 (RVEGASAFVS…QTVINDSIKR (239 aa)). Residues 382–445 (ESRLGTVQRI…SFTLRGEVVT (64 aa)) form the TRAM domain.

This sequence belongs to the methylthiotransferase family. MiaB subfamily. Monomer. [4Fe-4S] cluster serves as cofactor.

It is found in the cytoplasm. It catalyses the reaction N(6)-dimethylallyladenosine(37) in tRNA + (sulfur carrier)-SH + AH2 + 2 S-adenosyl-L-methionine = 2-methylsulfanyl-N(6)-dimethylallyladenosine(37) in tRNA + (sulfur carrier)-H + 5'-deoxyadenosine + L-methionine + A + S-adenosyl-L-homocysteine + 2 H(+). Its function is as follows. Catalyzes the methylthiolation of N6-(dimethylallyl)adenosine (i(6)A), leading to the formation of 2-methylthio-N6-(dimethylallyl)adenosine (ms(2)i(6)A) at position 37 in tRNAs that read codons beginning with uridine. The protein is tRNA-2-methylthio-N(6)-dimethylallyladenosine synthase of Albidiferax ferrireducens (strain ATCC BAA-621 / DSM 15236 / T118) (Rhodoferax ferrireducens).